The following is a 1186-amino-acid chain: Pumilio homolog 1 (1186 aa).

Serine 2 carries the post-translational modification N-acetylserine. Position 19 is a phosphoserine (serine 19). The segment at 22–73 (LKHHPQEPANPNMPVVLTSGTGSQAQPQPAANQALAAGTHSSPVPGSIGVAG) is disordered. Low complexity predominate over residues 45–58 (QAQPQPAANQALAA). A phosphoserine mark is found at serine 75, serine 98, and serine 106. Threonine 112 is subject to Phosphothreonine. Serine 124, serine 159, serine 197, serine 209, and serine 229 each carry phosphoserine. The interval 233–272 (SCLRKGGFGPRDADSDENDKGEKKNKGTFDGDKLGDLKEE) is disordered. The span at 250–272 (NDKGEKKNKGTFDGDKLGDLKEE) shows a compositional bias: basic and acidic residues. Serine 305 carries the post-translational modification Phosphoserine. The segment covering 485–502 (TNSANQQTTPQAQQGQQQ) has biased composition (low complexity). Disordered regions lie at residues 485 to 524 (TNSA…GQQT) and 613 to 648 (AGTT…FYGN). Residues 511–524 (RPLTPNQNQQGQQT) are compositionally biased toward polar residues. Threonine 514 carries the post-translational modification Phosphothreonine. The segment covering 626–639 (QQPQPQPQQQPNNN) has biased composition (low complexity). Residues serine 709 and serine 714 each carry the phosphoserine modification. The interval 742 to 773 (GPVGMPLPSQGPGHSQTPPPSLSSHGSSSSLN) is disordered. The segment covering 763–773 (LSSHGSSSSLN) has biased composition (low complexity). Arginine 796 bears the Omega-N-methylarginine mark. Residues serine 806 and serine 822 each carry the phosphoserine modification. One can recognise a PUM-HD domain in the interval 828 to 1168 (GRSRLLEDFR…HILAKLEKYY (341 aa)). Pumilio repeat units follow at residues 848–883 (EIAG…LVFN), 884–919 (EILQ…ALAE), 920–955 (RIRG…EMVR), 956–991 (ELDG…FIID), 992–1027 (AFKG…PILE), 1028–1063 (ELHQ…KIVA), 1064–1099 (EIRG…VLID), and 1103–1142 (TMND…IVMH). The tract at residues 863–867 (SRFIQ) is adenine-nucleotide binding in RNA target. The tract at residues 899–903 (NYVIQ) is uracil-nucleotide binding in RNA target. Residues 935-939 (CRVIQ) are adenine-nucleotide binding in RNA target. Positions 971 to 975 (NHVVQ) are non-specific-nucleotide binding in RNA target. The segment at 1007–1011 (CRVIQ) is adenine-nucleotide binding in RNA target. A uracil-nucleotide binding in RNA target region spans residues 1043-1047 (NYVIQ). A guanine-nucleotide binding in RNA target region spans residues 1079 to 1083 (SNVVE). Residues 1122–1126 (NYVVQ) are uracil-nucleotide binding in RNA target.

Recruits the CCR4-POP2-NOT deadenylase leading to translational inhibition and mRNA degradation. In case of viral infection, interacts with DHX58. Interacts with TRIM71 (via NHL repeats) in an RNA-dependent manner. Phosphorylation at Ser-714 promotes RNA-binding activity. Following growth factor stimulation phosphorylated at Ser-714, promoting binding to the 3'-UTR of CDKN1B/p27 mRNA. As to expression, expressed in brain, heart, kidney, muscle, intestine and stomach. Not expressed in cerebellum, corpus callosum, caudate nucleus, hippocampus, medulla oblongata and putamen. Expressed in all fetal tissues tested.

It is found in the cytoplasm. The protein localises to the P-body. It localises to the cytoplasmic granule. Its function is as follows. Sequence-specific RNA-binding protein that acts as a post-transcriptional repressor by binding the 3'-UTR of mRNA targets. Binds to an RNA consensus sequence, the Pumilio Response Element (PRE), 5'-UGUANAUA-3', that is related to the Nanos Response Element (NRE). Mediates post-transcriptional repression of transcripts via different mechanisms: acts via direct recruitment of the CCR4-POP2-NOT deadenylase leading to translational inhibition and mRNA degradation. Also mediates deadenylation-independent repression by promoting accessibility of miRNAs. Following growth factor stimulation, phosphorylated and binds to the 3'-UTR of CDKN1B/p27 mRNA, inducing a local conformational change that exposes miRNA-binding sites, promoting association of miR-221 and miR-222, efficient suppression of CDKN1B/p27 expression, and rapid entry to the cell cycle. Acts as a post-transcriptional repressor of E2F3 mRNAs by binding to its 3'-UTR and facilitating miRNA regulation. Represses a program of genes necessary to maintain genomic stability such as key mitotic, DNA repair and DNA replication factors. Its ability to repress those target mRNAs is regulated by the lncRNA NORAD (non-coding RNA activated by DNA damage) which, due to its high abundance and multitude of PUMILIO binding sites, is able to sequester a significant fraction of PUM1 and PUM2 in the cytoplasm. Involved in neuronal functions by regulating ATXN1 mRNA levels: acts by binding to the 3'-UTR of ATXN1 transcripts, leading to their down-regulation independently of the miRNA machinery. Plays a role in cytoplasmic sensing of viral infection. In testis, acts as a post-transcriptional regulator of spermatogenesis by binding to the 3'-UTR of mRNAs coding for regulators of p53/TP53. Involved in embryonic stem cell renewal by facilitating the exit from the ground state: acts by targeting mRNAs coding for naive pluripotency transcription factors and accelerates their down-regulation at the onset of differentiation. Binds specifically to miRNA MIR199A precursor, with PUM2, regulates miRNA MIR199A expression at a postranscriptional level. The sequence is that of Pumilio homolog 1 from Homo sapiens (Human).